A 253-amino-acid polypeptide reads, in one-letter code: uncharacterized protein (253 aa).

The next 6 membrane-spanning stretches (helical) occupy residues 17 to 37, 46 to 66, 93 to 113, 139 to 159, 172 to 192, and 222 to 242; these read MWLL…HIIA, IFGF…VFVF, LAAS…YGIW, MYGL…WTVF, AMVL…SPLV, and IHLS…LLIM.

It is found in the cell membrane. This is an uncharacterized protein from Bacillus subtilis (strain 168).